Consider the following 730-residue polypeptide: MFGRKRSVSFGGFGWIDKTMLASLKVKKQELANSSDATLPDRPLSPPLTAPPTMKSSEFFEMLEKMQGIKLEEQKPGPQKNKDDYIPYPSIDEVVEKGGPYPQVILPQFGGYWIEDPENVGTPTSLGSSICEEEEEDNLSPNTFGYKLECKGEARAYRRHFLGKDHLNFYCTGSSLGNLILSVKCEEAEGIEYLRVILRSKLKTVHERIPLAGLSKLPSVPQIAKAFCDDAVGLRFNPVLYPKASQMIVSYDEHEVNNTFKFGVIYQKARQTLEEELFGNNEESPAFKEFLDLLGDTITLQDFKGFRGGLDVTHGQTGVESVYTTFRDREIMFHVSTKLPFTDGDAQQLQRKRHIGNDIVAIIFQEENTPFVPDMIASNFLHAYIVVQVETPGTETPSYKVSVTAREDVPTFGPPLPSPPVFQKGPEFREFLLTKLTNAENACCKSDKFAKLEDRTRAALLDNLHDELHAHTQAMLGLGPEEDKFENGGHGGFLESFKRAIRVRSHSMETMVGGQKKSHSGGIPGSLSGGISHNSMEVTKTTFSPPVVAATVKNQSRSPIKRRSGLFPRLHTGSEGQGDSRARCDSTSSTPKTPDGGHSSQEIKSETSSNPSSPEICPNKEKPFMKLKENGRAISRSSSSTSSVSSTAGEGEAMEEGDSGGSQPSTTSPFKQEVFVYSPSPSSESPSLGAAATPIIMSRSPTDAKSRNSPRSNLKFRFDKLSHASSGAGH.

Ser7 bears the Phosphoserine; by PKG/PRKG1; in vitro mark. The segment at 32–53 (ANSSDATLPDRPLSPPLTAPPT) is disordered. Ser45 bears the Phosphoserine mark. Thr49 bears the Phosphothreonine mark. In terms of domain architecture, Rap-GAP spans 248-464 (IVSYDEHEVN…RTRAALLDNL (217 aa)). Ser507 is modified (phosphoserine). Positions 509–533 (ETMVGGQKKSHSGGIPGSLSGGISH) are disordered. 5 positions are modified to phosphoserine: Ser544, Ser558, Ser564, Ser612, and Ser613. The disordered stretch occupies residues 552–730 (VKNQSRSPIK…LSHASSGAGH (179 aa)). Positions 585–613 (DSTSSTPKTPDGGHSSQEIKSETSSNPSS) are enriched in polar residues. The segment covering 618-631 (PNKEKPFMKLKENG) has biased composition (basic and acidic residues). The segment covering 635–647 (SRSSSSTSSVSST) has biased composition (low complexity). Over residues 661 to 670 (GSQPSTTSPF) the composition is skewed to polar residues. The span at 678 to 687 (SPSPSSESPS) shows a compositional bias: low complexity. A compositionally biased stretch (polar residues) spans 699–712 (RSPTDAKSRNSPRS).

In terms of processing, in vitro phosphorylated by cGMP-dependent protein kinase 1 (cGKI) at Ser-7; the phosphorylation probably does not regulate GAP activity. Isoform 1 and isoform 2 are expressed in platelets with isoform 2 being the predominant form. Expressed in lymphocytes, heart, testis and pancreas.

The protein localises to the cytoplasm. It localises to the perinuclear region. Functionally, GTPase activator for the nuclear Ras-related regulatory protein RAP-1A (KREV-1), converting it to the putatively inactive GDP-bound state. The polypeptide is Rap1 GTPase-activating protein 2 (RAP1GAP2) (Homo sapiens (Human)).